The primary structure comprises 624 residues: DNA-directed RNA polymerase subunit gamma (624 aa).

Residues Cys70, Cys72, Cys85, and Cys88 each contribute to the Zn(2+) site. Mg(2+) is bound by residues Asp466, Asp468, and Asp470.

The protein belongs to the RNA polymerase beta' chain family. RpoC1 subfamily. As to quaternary structure, in cyanobacteria the RNAP catalytic core is composed of 2 alpha, 1 beta, 1 beta', 1 gamma and 1 omega subunit. When a sigma factor is associated with the core the holoenzyme is formed, which can initiate transcription. Mg(2+) serves as cofactor. The cofactor is Zn(2+).

It catalyses the reaction RNA(n) + a ribonucleoside 5'-triphosphate = RNA(n+1) + diphosphate. Its function is as follows. DNA-dependent RNA polymerase catalyzes the transcription of DNA into RNA using the four ribonucleoside triphosphates as substrates. This is DNA-directed RNA polymerase subunit gamma from Synechococcus sp. (strain ATCC 27144 / PCC 6301 / SAUG 1402/1) (Anacystis nidulans).